The chain runs to 265 residues: Thiazole synthase (265 aa).

Lys-103 functions as the Schiff-base intermediate with DXP in the catalytic mechanism. Residues Gly-164, 190–191 (AG), and 212–213 (NT) each bind 1-deoxy-D-xylulose 5-phosphate.

This sequence belongs to the ThiG family. As to quaternary structure, homotetramer. Forms heterodimers with either ThiH or ThiS.

Its subcellular location is the cytoplasm. The enzyme catalyses [ThiS sulfur-carrier protein]-C-terminal-Gly-aminoethanethioate + 2-iminoacetate + 1-deoxy-D-xylulose 5-phosphate = [ThiS sulfur-carrier protein]-C-terminal Gly-Gly + 2-[(2R,5Z)-2-carboxy-4-methylthiazol-5(2H)-ylidene]ethyl phosphate + 2 H2O + H(+). Its pathway is cofactor biosynthesis; thiamine diphosphate biosynthesis. Its function is as follows. Catalyzes the rearrangement of 1-deoxy-D-xylulose 5-phosphate (DXP) to produce the thiazole phosphate moiety of thiamine. Sulfur is provided by the thiocarboxylate moiety of the carrier protein ThiS. In vitro, sulfur can be provided by H(2)S. The polypeptide is Thiazole synthase (Bordetella bronchiseptica (strain ATCC BAA-588 / NCTC 13252 / RB50) (Alcaligenes bronchisepticus)).